The primary structure comprises 3432 residues: Genome polyprotein (3432 aa).

Positions 2–15 are interaction with host EXOC1; the sequence is TKKPGGPGKNRAIN. Residues 2–109 lie on the Cytoplasmic side of the membrane; it reads TKKPGGPGKN…RKQNKRGGNE (108 aa). The interval 37–72 is hydrophobic; homodimerization of capsid protein C; the sequence is LLDGRGPVRFVLALITFFKFTALAPTKALLGRWKAV. The propeptide at 106 to 127 is ER anchor for the capsid protein C, removed in mature form by serine protease NS3; the sequence is GGNEGSIMWLASLAVVIAYAGA. A helical transmembrane segment spans residues 110–130; it reads GSIMWLASLAVVIAYAGAMKL. The Extracellular segment spans residues 131-253; it reads SNFQGKLLMT…ATRYLMKTEN (123 aa). N-linked (GlcNAc...) asparagine; by host glycosylation is present at asparagine 142. Residues 254 to 274 form a helical membrane-spanning segment; it reads WIIRNPGYAFLAATLGWMLGS. Residues 275-279 lie on the Cytoplasmic side of the membrane; the sequence is NNGQR. Residues 280 to 294 traverse the membrane as a helical segment; sequence VVFTILLLLVAPAYS. Residues 295–746 are Extracellular-facing; it reads FNCLGMGNRD…QVFGGAFRTL (452 aa). 6 disulfide bridges follow: cysteine 297/cysteine 324, cysteine 354/cysteine 410, cysteine 354/cysteine 415, cysteine 368/cysteine 399, cysteine 386/cysteine 410, and cysteine 386/cysteine 415. The interval 392-405 is fusion peptide; the sequence is DRGWGNGCGLFGKG. Asparagine 448 carries N-linked (GlcNAc...) asparagine; by host glycosylation. Disulfide bonds link cysteine 484-cysteine 581 and cysteine 598-cysteine 629. A helical membrane pass occupies residues 747–767; the sequence is FGGMSWITQGLMGALLLWMGV. At 768–773 the chain is on the cytoplasmic side; that stretch reads NARDRS. Residues 774-794 traverse the membrane as a helical segment; it reads IALAFLATGGVLVFLATNVHA. The Extracellular segment spans residues 795–1219; it reads DTGCAIDITR…AFAEANSGGD (425 aa). Intrachain disulfides connect cysteine 798–cysteine 809, cysteine 849–cysteine 937, cysteine 973–cysteine 1017, cysteine 1074–cysteine 1123, cysteine 1085–cysteine 1106, and cysteine 1107–cysteine 1110. 2 N-linked (GlcNAc...) asparagine; by host glycosylation sites follow: asparagine 924 and asparagine 1001. Residues 1220-1240 traverse the membrane as a helical segment; the sequence is VLHLALIAVFKIQPAFLVMNM. Residues 1241–1250 lie on the Cytoplasmic side of the membrane; the sequence is LSTRWTNQEN. The chain crosses the membrane as a helical span at residues 1251–1271; the sequence is VVLVLGAALFQLASVDLQIGV. Residue histidine 1272 is a topological domain, lumenal. The helical transmembrane segment at 1273-1293 threads the bilayer; the sequence is GILNAAAIAWMIVRAITFPTT. Residues 1294–1309 lie on the Cytoplasmic side of the membrane; that stretch reads SSVTMPVLALLTPGMR. The helical transmembrane segment at 1310 to 1330 threads the bilayer; sequence ALYLDTYRIILLVIGICSLLQ. Residues 1331-1341 are Lumenal-facing; that stretch reads ERKKTMAKKKG. A helical membrane pass occupies residues 1342–1362; sequence AVLLGLALTSTGWFSPTTIAA. Topologically, residues 1363–1374 are cytoplasmic; the sequence is GLMVCNPNKKRG. A helical membrane pass occupies residues 1375–1395; that stretch reads WPATEFLSAVGLMFAIVGGLA. The Lumenal portion of the chain corresponds to 1396–1398; the sequence is ELD. The helical transmembrane segment at 1399 to 1419 threads the bilayer; that stretch reads IESMSIPFMLAGLMAVSYVVS. The Cytoplasmic segment spans residues 1420–1476; the sequence is GKATDMWLERAADISWEMDAAITGSSRRLDVKLDDDGDFHLIDDPGVPWKVWVLRMS. An interacts with and activates NS3 protease region spans residues 1427 to 1466; the sequence is LERAADISWEMDAAITGSSRRLDVKLDDDGDFHLIDDPGV. Residues 1477–1497 constitute an intramembrane region (helical); that stretch reads CIGLAALTPWAIVPAAFGYWL. At 1498 to 2173 the chain is on the cytoplasmic side; that stretch reads TLKTTKRGGV…RMALEELPDA (676 aa). One can recognise a Peptidase S7 domain in the interval 1505-1682; that stretch reads GGVFWDTPSP…DRQEEPVPEA (178 aa). Active-site charge relay system; for serine protease NS3 activity residues include histidine 1555, aspartate 1579, and serine 1639. Positions 1685–1841 constitute a Helicase ATP-binding domain; sequence PNMLRKRQMT…DSNAPIHDLQ (157 aa). The segment at 1689 to 1692 is important for RNA-binding; sequence RKRQ. An ATP-binding site is contributed by 1698 to 1705; it reads LHPGSGKT. The DEAH box signature appears at 1789-1792; sequence DEAH. In terms of domain architecture, Helicase C-terminal spans 1852-2017; the sequence is GYEWITEYAG…GLVAQLYGPE (166 aa). Residue lysine 1893 is modified to N6-acetyllysine; by host. A disordered region spans residues 1950-1971; that stretch reads NPSPITSASAAQRRGRVGRNPN. The segment at 2168-2172 is regulates the ATPase activity of NS3 helicase; that stretch reads EELPD. The chain crosses the membrane as a helical span at residues 2174–2194; the sequence is LETITLIVAITVMTGGFFLLM. Topologically, residues 2195–2199 are lumenal; sequence MQRKG. The segment at residues 2200 to 2220 is an intramembrane region (helical); sequence IGKMGLGALVLTLATFFLWAA. A topological domain (lumenal) is located at residue glutamate 2221. A helical transmembrane segment spans residues 2222 to 2242; the sequence is VPGTKIAGTLLIALLLMVVLI. Over 2243-2257 the chain is Cytoplasmic; sequence PEPEKQRSQTDNQLA. A helical membrane pass occupies residues 2258-2278; that stretch reads VFLICVLTVVGVVAANEYGML. At 2279–2311 the chain is on the lumenal side; the sequence is EKTKADLKSMFVGKTQASGLTGLPSMALDLRPA. An intramembrane region (helical) is located at residues 2312-2332; that stretch reads TAWALYGGSTVVLTPLLKHLI. The Lumenal portion of the chain corresponds to 2333 to 2368; that stretch reads TSEYVTTSLASINSQAGSLFVLPRGVPFTDLDLTVG. The chain crosses the membrane as a helical span at residues 2369–2389; the sequence is LVFLGCWGQITLTTFLTAMVL. Topologically, residues 2390 to 2444 are cytoplasmic; sequence ATLHYGYMLPGWQAEALRAAQRRTAAGIMKNAVVDGMVATDVPELERTTPLMQKK. Residues 2445 to 2465 form a helical membrane-spanning segment; sequence VGQVLLIGVSVAAFLVNPNVT. Residues 2466–2469 lie on the Lumenal side of the membrane; that stretch reads TVRE. The helical transmembrane segment at 2470–2490 threads the bilayer; that stretch reads AGVLVTAATLTLWDNGASAVW. Over 2491 to 3432 the chain is Cytoplasmic; sequence NSTTATGLCH…DVLIQEDRVI (942 aa). Positions 2528–2793 constitute an mRNA cap 0-1 NS5-type MT domain; that stretch reads GRPGGRTLGE…DVNLGSGTRA (266 aa). An S-adenosyl-L-methionine-binding site is contributed by serine 2583. A Phosphoserine modification is found at serine 2583. Lysine 2588 acts as the For 2'-O-MTase activity in catalysis. S-adenosyl-L-methionine is bound by residues glycine 2613, tryptophan 2614, threonine 2631, lysine 2632, aspartate 2658, and valine 2659. The active-site For 2'-O-MTase activity is the aspartate 2673. Isoleucine 2674 contributes to the S-adenosyl-L-methionine binding site. Active-site for 2'-O-MTase activity residues include lysine 2709 and glutamate 2745. Tyrosine 2747 is a binding site for S-adenosyl-L-methionine. Zn(2+) contacts are provided by glutamate 2967, histidine 2971, cysteine 2976, and cysteine 2979. The region spanning 3057–3209 is the RdRp catalytic domain; it reads GKMYADDTAG…KPLDDRFATA (153 aa). Zn(2+)-binding residues include histidine 3244, cysteine 3260, and cysteine 3379.

In the N-terminal section; belongs to the class I-like SAM-binding methyltransferase superfamily. mRNA cap 0-1 NS5-type methyltransferase family. As to quaternary structure, homodimer. Interacts (via N-terminus) with host EXOC1 (via C-terminus); this interaction results in EXOC1 degradation through the proteasome degradation pathway. Forms heterodimers with envelope protein E in the endoplasmic reticulum and Golgi. In terms of assembly, homodimer; in the endoplasmic reticulum and Golgi. Interacts with protein prM. Interacts with non-structural protein 1. Interacts with host HSPA5. As to quaternary structure, homodimer; Homohexamer when secreted. Interacts with envelope protein E. NS1 interacts with NS4B. Interacts with host complement protein CFH; this interaction leads to the degradation of C3. Interacts (via N-terminus) with serine protease NS3. In terms of assembly, forms a heterodimer with serine protease NS3. May form homooligomers. As to quaternary structure, forms a heterodimer with NS2B. Interacts with non-structural protein 2A (via N-terminus). Interacts with NS4B. Interacts with unphosphorylated RNA-directed RNA polymerase NS5; this interaction stimulates RNA-directed RNA polymerase NS5 guanylyltransferase activity. Interacts with host ILF2. Interacts with serine protease NS3. In terms of assembly, homodimer. Interacts with host STAT2; this interaction inhibits the phosphorylation of the latter, and, when all viral proteins are present (polyprotein), targets STAT2 for degradation. Interacts with serine protease NS3. Mn(2+) is required as a cofactor. It depends on Mg(2+) as a cofactor. Post-translationally, specific enzymatic cleavages in vivo yield mature proteins. Cleavages in the lumen of endoplasmic reticulum are performed by host signal peptidase, whereas cleavages in the cytoplasmic side are performed by serine protease NS3. Signal cleavage at the 2K-4B site requires a prior NS3 protease-mediated cleavage at the 4A-2K site. In terms of processing, cleaved in post-Golgi vesicles by a host furin, releasing the mature small envelope protein M, and peptide pr. This cleavage is incomplete as up to 30% of viral particles still carry uncleaved prM. N-glycosylated. Post-translationally, N-glycosylated. The excreted form is glycosylated and this is required for efficient secretion of the protein from infected cells. In terms of processing, acetylated by host KAT5. Acetylation modulates NS3 RNA-binding and unwinding activities and plays an important positive role for viral replication. Phosphorylated on serines residues. This phosphorylation may trigger NS5 nuclear localization.

The protein localises to the virion. It localises to the host nucleus. Its subcellular location is the host cytoplasm. The protein resides in the host perinuclear region. It is found in the secreted. The protein localises to the virion membrane. It localises to the host endoplasmic reticulum membrane. Its subcellular location is the host cell surface. It carries out the reaction Selective hydrolysis of -Xaa-Xaa-|-Yaa- bonds in which each of the Xaa can be either Arg or Lys and Yaa can be either Ser or Ala.. The catalysed reaction is RNA(n) + a ribonucleoside 5'-triphosphate = RNA(n+1) + diphosphate. The enzyme catalyses a ribonucleoside 5'-triphosphate + H2O = a ribonucleoside 5'-diphosphate + phosphate + H(+). It catalyses the reaction ATP + H2O = ADP + phosphate + H(+). It carries out the reaction a 5'-end (5'-triphosphoguanosine)-ribonucleoside in mRNA + S-adenosyl-L-methionine = a 5'-end (N(7)-methyl 5'-triphosphoguanosine)-ribonucleoside in mRNA + S-adenosyl-L-homocysteine. The catalysed reaction is a 5'-end (N(7)-methyl 5'-triphosphoguanosine)-ribonucleoside in mRNA + S-adenosyl-L-methionine = a 5'-end (N(7)-methyl 5'-triphosphoguanosine)-(2'-O-methyl-ribonucleoside) in mRNA + S-adenosyl-L-homocysteine + H(+). Functionally, plays a role in virus budding by binding to the cell membrane and gathering the viral RNA into a nucleocapsid that forms the core of a mature virus particle. During virus entry, may induce genome penetration into the host cytoplasm after hemifusion induced by the surface proteins. Can migrate to the cell nucleus where it modulates host functions. Overcomes the anti-viral effects of host EXOC1 by sequestering and degrading the latter through the proteasome degradation pathway. Inhibits RNA silencing by interfering with host Dicer. In terms of biological role, prevents premature fusion activity of envelope proteins in trans-Golgi by binding to envelope protein E at pH 6.0. After virion release in extracellular space, gets dissociated from E dimers. Its function is as follows. Acts as a chaperone for envelope protein E during intracellular virion assembly by masking and inactivating envelope protein E fusion peptide. prM is the only viral peptide matured by host furin in the trans-Golgi network probably to avoid catastrophic activation of the viral fusion activity in acidic Golgi compartment prior to virion release. prM-E cleavage is inefficient, and many virions are only partially matured. These uncleaved prM would play a role in immune evasion. Functionally, may play a role in virus budding. Exerts cytotoxic effects by activating a mitochondrial apoptotic pathway through M ectodomain. May display a viroporin activity. Binds to host cell surface receptor and mediates fusion between viral and cellular membranes. Efficient virus attachment to cell is, at least in part, mediated by host HSPA5. Envelope protein is synthesized in the endoplasmic reticulum in the form of heterodimer with protein prM. They play a role in virion budding in the ER, and the newly formed immature particle is covered with 60 spikes composed of heterodimer between precursor prM and envelope protein E. The virion is transported to the Golgi apparatus where the low pH causes dissociation of PrM-E heterodimers and formation of E homodimers. prM-E cleavage is inefficient, and many virions are only partially matured. These uncleaved prM would play a role in immune evasion. In terms of biological role, involved in immune evasion, pathogenesis and viral replication. Once cleaved off the polyprotein, is targeted to three destinations: the viral replication cycle, the plasma membrane and the extracellular compartment. Essential for viral replication. Required for formation of the replication complex and recruitment of other non-structural proteins to the ER-derived membrane structures. Excreted as a hexameric lipoparticle that plays a role against host immune response. Antagonizing the complement function. Binds to the host macrophages and dendritic cells. Inhibits signal transduction originating from Toll-like receptor 3 (TLR3). Its function is as follows. Component of the viral RNA replication complex that functions in virion assembly and antagonizes the host alpha/beta interferon antiviral response. Functionally, required cofactor for the serine protease function of NS3. May have membrane-destabilizing activity and form viroporins. Displays three enzymatic activities: serine protease, NTPase and RNA helicase. NS3 serine protease, in association with NS2B, performs its autocleavage and cleaves the polyprotein at dibasic sites in the cytoplasm: C-prM, NS2A-NS2B, NS2B-NS3, NS3-NS4A, NS4A-2K and NS4B-NS5. NS3 RNA helicase binds RNA and unwinds dsRNA in the 3' to 5' direction. In terms of biological role, regulates the ATPase activity of the NS3 helicase activity. NS4A allows NS3 helicase to conserve energy during unwinding. Its function is as follows. Functions as a signal peptide for NS4B and is required for the interferon antagonism activity of the latter. Functionally, induces the formation of ER-derived membrane vesicles where the viral replication takes place. Inhibits interferon (IFN)-induced host STAT1 phosphorylation and nuclear translocation, thereby preventing the establishment of cellular antiviral state by blocking the IFN-alpha/beta pathway. Inhibits STAT2 translocation in the nucleus after IFN-alpha treatment. Replicates the viral (+) and (-) RNA genome, and performs the capping of genomes in the cytoplasm. NS5 methylates viral RNA cap at guanine N-7 and ribose 2'-O positions. Besides its role in RNA genome replication, also prevents the establishment of cellular antiviral state by blocking the interferon-alpha/beta (IFN-alpha/beta) signaling pathway. Inhibits host TYK2 and STAT2 phosphorylation, thereby preventing activation of JAK-STAT signaling pathway. In Ardeidae (herons), this protein is Genome polyprotein.